A 177-amino-acid chain; its full sequence is Putative rubredoxin (177 aa).

In terms of domain architecture, Rubredoxin-like spans methionine 1–serine 38. Residues cysteine 4, cysteine 7, cysteine 25, and cysteine 28 each contribute to the Fe cation site.

The protein belongs to the rubredoxin family. The cofactor is Fe(3+).

The protein is Putative rubredoxin (rdxA) of Methanothermobacter thermautotrophicus (strain ATCC 29096 / DSM 1053 / JCM 10044 / NBRC 100330 / Delta H) (Methanobacterium thermoautotrophicum).